Reading from the N-terminus, the 434-residue chain is Lipoyl synthase, mitochondrial (434 aa).

The transit peptide at 1-31 directs the protein to the mitochondrion; the sequence is MAASARGLRTLQSAHSSTTVPRLQLAVSRCY. Over residues 34-54 the composition is skewed to low complexity; sequence TTSPDPPITNSSNSSNSTPTP. Residues 34–55 are disordered; the sequence is TTSPDPPITNSSNSSNSTPTPK. The [4Fe-4S] cluster site is built by Cys-144, Cys-149, Cys-155, Cys-175, Cys-179, Cys-182, and Ser-390. The Radical SAM core domain maps to 158-379; it reads GSSKSAATAT…KERALEMGFL (222 aa).

The protein belongs to the radical SAM superfamily. Lipoyl synthase family. The cofactor is [4Fe-4S] cluster.

The protein resides in the mitochondrion. The enzyme catalyses [[Fe-S] cluster scaffold protein carrying a second [4Fe-4S](2+) cluster] + N(6)-octanoyl-L-lysyl-[protein] + 2 oxidized [2Fe-2S]-[ferredoxin] + 2 S-adenosyl-L-methionine + 4 H(+) = [[Fe-S] cluster scaffold protein] + N(6)-[(R)-dihydrolipoyl]-L-lysyl-[protein] + 4 Fe(3+) + 2 hydrogen sulfide + 2 5'-deoxyadenosine + 2 L-methionine + 2 reduced [2Fe-2S]-[ferredoxin]. It participates in protein modification; protein lipoylation via endogenous pathway; protein N(6)-(lipoyl)lysine from octanoyl-[acyl-carrier-protein]: step 2/2. Its function is as follows. Catalyzes the radical-mediated insertion of two sulfur atoms into the C-6 and C-8 positions of the octanoyl moiety bound to the lipoyl domains of lipoate-dependent enzymes, thereby converting the octanoylated domains into lipoylated derivatives. The sequence is that of Lipoyl synthase, mitochondrial from Paracoccidioides brasiliensis (strain Pb03).